The chain runs to 375 residues: Succinyl-diaminopimelate desuccinylase (375 aa).

Zn(2+) is bound at residue histidine 66. Aspartate 68 is a catalytic residue. A Zn(2+)-binding site is contributed by aspartate 99. Glutamate 133 serves as the catalytic Proton acceptor. Zn(2+) contacts are provided by glutamate 134, glutamate 162, and histidine 348.

The protein belongs to the peptidase M20A family. DapE subfamily. Homodimer. The cofactor is Zn(2+). It depends on Co(2+) as a cofactor.

The enzyme catalyses N-succinyl-(2S,6S)-2,6-diaminopimelate + H2O = (2S,6S)-2,6-diaminopimelate + succinate. It participates in amino-acid biosynthesis; L-lysine biosynthesis via DAP pathway; LL-2,6-diaminopimelate from (S)-tetrahydrodipicolinate (succinylase route): step 3/3. Its function is as follows. Catalyzes the hydrolysis of N-succinyl-L,L-diaminopimelic acid (SDAP), forming succinate and LL-2,6-diaminopimelate (DAP), an intermediate involved in the bacterial biosynthesis of lysine and meso-diaminopimelic acid, an essential component of bacterial cell walls. This Buchnera aphidicola subsp. Acyrthosiphon pisum (strain 5A) protein is Succinyl-diaminopimelate desuccinylase.